We begin with the raw amino-acid sequence, 1779 residues long: 6-methylsalicylic acid synthase (1779 aa).

A compositionally biased stretch (polar residues) spans 1-11; sequence MSASRSSTKFS. The tract at residues 1-40 is disordered; that stretch reads MSASRSSTKFSTPAEGSDNGKEFTTPATSTEGHEVPDRPG. A compositionally biased stretch (basic and acidic residues) spans 31-40; the sequence is EGHEVPDRPG. One can recognise a Ketosynthase family 3 (KS3) domain in the interval 43–472; the sequence is LADVAIIGMA…GTVSHAVLEA (430 aa). Catalysis depends on for beta-ketoacyl synthase activity residues Cys-215, His-350, and His-392. The segment at 586–883 is malonyl-CoA:ACP transacylase (MAT) domain; sequence WIFSGHGAQW…TPTMVRRQPA (298 aa). The active-site For acyl/malonyl transferase activity is the Ser-672. A product template (PT) domain region spans residues 942 to 1218; it reads THDPAANNLL…SFAGLEGESF (277 aa). Residues 948-1064 are N-terminal hotdog fold; sequence NNLLGKRIAL…AAVGAANVVP (117 aa). One can recognise a PKS/mFAS DH domain in the interval 948–1219; it reads NNLLGKRIAL…FAGLEGESFS (272 aa). His-980 serves as the catalytic Proton acceptor; for dehydratase activity. The tract at residues 1079–1219 is C-terminal hotdog fold; sequence PQKLADSFSI…FAGLEGESFS (141 aa). Asp-1138 functions as the Proton donor; for dehydratase activity in the catalytic mechanism. The 75-residue stretch at 1703-1777 folds into the Carrier domain; it reads QHLRDVINGC…HLVKHFTKEL (75 aa). Ser-1737 carries the O-(pantetheine 4'-phosphoryl)serine modification.

It catalyses the reaction 3 malonyl-CoA + acetyl-CoA + NADPH + 3 H(+) = 6-methylsalicylate + 3 CO2 + NADP(+) + 4 CoA + H2O. Its pathway is secondary metabolite biosynthesis; terpenoid biosynthesis. Functionally, non-reducing polyketide synthase; part of the gene cluster that mediates the biosynthesis of yanuthone D, a fungal isoprenoid epoxycyclohexenone that acts as an antibiotic against fungi and bacteria. The first step of the pathway is the synthesis of 6-methylsalicylic acid (6-MSA) by the polyketide synthase yanA. 6-MSA is then converted to m-cresol by the decarboxylase yanB. The cytochrome P450 monooxygenase yanC then catalyzes the oxidation of m-cresol to toluquinol. Epoxidation of toluquinol is then performed by the short chain dehydrogenase yanD, with the help of yanE, and a further prenylation by yanG leads to 7-deacetoxyyanuthone A. The next step is the hydroxylation of C-22 of 7-deacetoxyyanuthone A by the cytochrome P450 monooxygenase yanH to yield 22-deacetylyanuthone A. O-Mevalon transferase yanI then attaches mevalon to the hydroxyl group of 22-deacetylyanuthone A to produce yanuthone E. Finally, the FAD-dependent monooxygenase yanF oxidizes the hydroxyl group at C15 of yanuthone E to form yanuthone D. Furthermore, several branching points in the pathway lead to the production of yanuthones F and G from 7-deacetoxyyanuthone A; yanuthones H and I from 22-deacetylyanuthone A; and yanuthone J from yanuthone E. This Aspergillus niger (strain ATCC 1015 / CBS 113.46 / FGSC A1144 / LSHB Ac4 / NCTC 3858a / NRRL 328 / USDA 3528.7) protein is 6-methylsalicylic acid synthase.